Here is a 438-residue protein sequence, read N- to C-terminus: Histidine--tRNA ligase (438 aa).

This sequence belongs to the class-II aminoacyl-tRNA synthetase family. Homodimer.

The protein resides in the cytoplasm. It carries out the reaction tRNA(His) + L-histidine + ATP = L-histidyl-tRNA(His) + AMP + diphosphate + H(+). The sequence is that of Histidine--tRNA ligase (hisS) from Thermobifida fusca (strain YX).